Consider the following 437-residue polypeptide: 26S proteasome regulatory subunit 4 homolog (437 aa).

The segment at 1-47 (MGQGVSSGQDKKKKKGSNQKPKYEPPVQSKFGRKKRKGGPATAEKLP) is disordered. Glycine 2 is lipidated: N-myristoyl glycine. 223–230 (GAPGTGKT) lines the ATP pocket. Glycyl lysine isopeptide (Lys-Gly) (interchain with G-Cter in ubiquitin) cross-links involve residues lysine 234, lysine 255, and lysine 290.

The protein belongs to the AAA ATPase family.

The protein resides in the cytoplasm. It is found in the nucleus. Its function is as follows. The 26S proteasome is involved in the ATP-dependent degradation of ubiquitinated proteins. The regulatory (or ATPase) complex confers ATP dependency and substrate specificity to the 26S complex. Has ATPase activity. This Saccharomyces cerevisiae (strain ATCC 204508 / S288c) (Baker's yeast) protein is 26S proteasome regulatory subunit 4 homolog (RPT2).